A 177-amino-acid chain; its full sequence is Bifunctional protein PyrR (177 aa).

Residues 99 to 111 (VVLVDDVLFTGRT) carry the PRPP-binding motif.

The protein belongs to the purine/pyrimidine phosphoribosyltransferase family. PyrR subfamily.

It carries out the reaction UMP + diphosphate = 5-phospho-alpha-D-ribose 1-diphosphate + uracil. In terms of biological role, regulates the transcription of the pyrimidine nucleotide (pyr) operon in response to exogenous pyrimidines. Its function is as follows. Also displays a weak uracil phosphoribosyltransferase activity which is not physiologically significant. The polypeptide is Bifunctional protein PyrR (Geobacter sulfurreducens (strain ATCC 51573 / DSM 12127 / PCA)).